A 102-amino-acid polypeptide reads, in one-letter code: Large ribosomal subunit protein bL21 (102 aa).

The protein belongs to the bacterial ribosomal protein bL21 family. As to quaternary structure, part of the 50S ribosomal subunit. Contacts protein L20.

This protein binds to 23S rRNA in the presence of protein L20. This Campylobacter jejuni subsp. jejuni serotype O:6 (strain 81116 / NCTC 11828) protein is Large ribosomal subunit protein bL21.